Reading from the N-terminus, the 255-residue chain is Kallikrein-15 (255 aa).

The N-terminal stretch at 1–15 (MWLLLPLSFLLTSTA) is a signal peptide. Residues 16-20 (QDGGK) constitute a propeptide, activation peptide. Residues 21–253 (LLEGEECAPH…YVKWIRETMK (233 aa)) form a serine protease region. Cysteines 46 and 62 form a disulfide. Active-site charge relay system residues include His61 and Asp105. 3 disulfides stabilise this stretch: Cys137–Cys214, Cys179–Cys193, and Cys204–Cys229. Residue Asn170 is glycosylated (N-linked (GlcNAc...) asparagine). Catalysis depends on Ser208, which acts as the Charge relay system. A glycan (N-linked (GlcNAc...) asparagine) is linked at Asn231.

The protein belongs to the peptidase S1 family. Kallikrein subfamily.

It is found in the secreted. Protease whose physiological substrate is not yet known. The sequence is that of Kallikrein-15 (KLK15) from Saguinus oedipus (Cotton-top tamarin).